A 141-amino-acid chain; its full sequence is Large ribosomal subunit protein uL11 (141 aa).

Belongs to the universal ribosomal protein uL11 family. In terms of assembly, part of the ribosomal stalk of the 50S ribosomal subunit. Interacts with L10 and the large rRNA to form the base of the stalk. L10 forms an elongated spine to which L12 dimers bind in a sequential fashion forming a multimeric L10(L12)X complex. In terms of processing, one or more lysine residues are methylated.

In terms of biological role, forms part of the ribosomal stalk which helps the ribosome interact with GTP-bound translation factors. This is Large ribosomal subunit protein uL11 from Ligilactobacillus salivarius (strain UCC118) (Lactobacillus salivarius).